Reading from the N-terminus, the 352-residue chain is C-C chemokine receptor type 5 (352 aa).

Residues 1–30 (MDYQVSSPIYDIDYYTSEPCQKINVKQIAA) lie on the Extracellular side of the membrane. Position 3 is a sulfotyrosine (tyrosine 3). 2 O-linked (GalNAc...) serine glycosylation sites follow: serine 6 and serine 7. A sulfotyrosine mark is found at tyrosine 10, tyrosine 14, and tyrosine 15. Intrachain disulfides connect cysteine 20–cysteine 269 and cysteine 101–cysteine 178. A helical transmembrane segment spans residues 31-58 (RLLPPLYSLVFIFGFVGNMLVILILINC). Topologically, residues 59–68 (KRLKSMTDIY) are cytoplasmic. A helical transmembrane segment spans residues 69–89 (LLNLAISDLFFLLTVPFWAHY). Topologically, residues 90-102 (AAAQWDFGNTMCQ) are extracellular. Residues 103–124 (LLTGLYFIGFFSGIFFIILLTI) form a helical membrane-spanning segment. At 125-141 (DRYLAIVHAVFALKART) the chain is on the cytoplasmic side. A helical membrane pass occupies residues 142-166 (VTFGVVTSVITWVVAVFASLPGIIF). Over 167–198 (TRSQKEGLHYTCSSHFPYSQYQFWKNFQTLKI) the chain is Extracellular. Residues 199 to 218 (VILGLVLPLLVMVICYSGIL) traverse the membrane as a helical segment. Residues 219–235 (KTLLRCRNEKKRHRAVR) are Cytoplasmic-facing. A helical membrane pass occupies residues 236 to 260 (LIFTIMIVYFLFWAPYNIVLLLNTF). At 261-277 (QEFFGLNNCSSSNRLDQ) the chain is on the extracellular side. A helical transmembrane segment spans residues 278–301 (AMQVTETLGMTHCCINPIIYAFVG). Topologically, residues 302-352 (EKFRNYLLVFFQKHIAKRFCKCCSIFQQEAPERASSVYTRSTGEQEISVGL) are cytoplasmic. Residues cysteine 321, cysteine 323, and cysteine 324 are each lipidated (S-palmitoyl cysteine). Phosphoserine; by BARK1 is present on residues serine 336, serine 337, serine 342, and serine 349.

It belongs to the G-protein coupled receptor 1 family. In terms of assembly, interacts with PRAF2. Efficient ligand binding to CCL3/MIP-1alpha and CCL4/MIP-1beta requires sulfation, O-glycosylation and sialic acid modifications. Glycosylation on Ser-6 is required for efficient binding of CCL4. Interacts with GRK2. Interacts with ARRB1 and ARRB2. Interacts with CNIH4. Interacts with S100A4; this interaction stimulates T-lymphocyte chemotaxis. Post-translationally, sulfated on at least 2 of the N-terminal tyrosines. Sulfation is required for efficient binding of the chemokines, CCL3 and CCL4. Palmitoylation in the C-terminal is important for cell surface expression. In terms of processing, phosphorylation on serine residues in the C-terminal is stimulated by binding CC chemokines especially by APO-RANTES. Post-translationally, O-glycosylated, but not N-glycosylated. Ser-6 appears to be the major site even if Ser-7 may be also O-glycosylated. Also sialylated glycans present which contribute to chemokine binding. Thr-16 and Ser-17 may also be glycosylated and, if so, with small moieties such as a T-antigen.

The protein resides in the cell membrane. Functionally, receptor for a number of inflammatory CC-chemokines including CCL3/MIP-1-alpha, CCL4/MIP-1-beta and RANTES and subsequently transduces a signal by increasing the intracellular calcium ion level. May play a role in the control of granulocytic lineage proliferation or differentiation. Participates in T-lymphocyte migration to the infection site by acting as a chemotactic receptor. The sequence is that of C-C chemokine receptor type 5 (CCR5) from Pan paniscus (Pygmy chimpanzee).